We begin with the raw amino-acid sequence, 466 residues long: Prophage integrase IntF (466 aa).

One can recognise a Core-binding (CB) domain in the interval 134–239; that stretch reads KTKVTFSVAW…LLRAFIKWSN (106 aa). Residues 268-445 form the Tyr recombinase domain; sequence KADDCLQKEQ…PLDLLRKWHE (178 aa). Catalysis depends on residues arginine 306, lysine 328, histidine 396, arginine 399, and histidine 422. The active-site O-(3'-phospho-DNA)-tyrosine intermediate is the tyrosine 432.

Belongs to the 'phage' integrase family.

In terms of biological role, integrase is necessary for integration of the phage into the host genome by site-specific recombination. In conjunction with excisionase, integrase is also necessary for excision of the prophage from the host genome. This is Prophage integrase IntF (intF) from Escherichia coli (strain K12).